A 393-amino-acid chain; its full sequence is UDP-glucose 6-dehydrogenase (393 aa).

Residues valine 11, aspartate 31, lysine 36, threonine 85, threonine 120, and glutamate 147 each contribute to the NAD(+) site. Residues glutamate 143 to glutamate 147, lysine 199, asparagine 203, tyrosine 244 to serine 248, and glycine 252 each bind substrate. Residue tyrosine 254 coordinates NAD(+). The active-site Nucleophile is the cysteine 255. Residue lysine 258 coordinates NAD(+). Lysine 309 lines the substrate pocket. Residue arginine 316 coordinates NAD(+).

The protein belongs to the UDP-glucose/GDP-mannose dehydrogenase family. In terms of assembly, homodimer.

The enzyme catalyses UDP-alpha-D-glucose + 2 NAD(+) + H2O = UDP-alpha-D-glucuronate + 2 NADH + 3 H(+). It participates in nucleotide-sugar biosynthesis; UDP-alpha-D-glucuronate biosynthesis; UDP-alpha-D-glucuronate from UDP-alpha-D-glucose: step 1/1. It functions in the pathway capsule biogenesis; capsule polysaccharide biosynthesis. Functionally, catalyzes the formation of UDP-glucuronic acid which is required for capsular polysaccharide synthesis. Does not catalyze the formation of glucuronamide moiety of the capsular polysaccharide. This chain is UDP-glucose 6-dehydrogenase, found in Campylobacter jejuni subsp. jejuni serotype O:2 (strain ATCC 700819 / NCTC 11168).